The chain runs to 168 residues: Putative flavin-containing monooxygenase FMO GS-OX-like 11 (168 aa).

17–22 (GAGAAG) is an FAD binding site.

This sequence belongs to the FMO family. FAD is required as a cofactor.

Its function is as follows. Catalyzes the conversion of methylthioalkyl glucosinolates of any chain length into methylsulfinylalkyl glucosinolates. The polypeptide is Putative flavin-containing monooxygenase FMO GS-OX-like 11 (Arabidopsis thaliana (Mouse-ear cress)).